We begin with the raw amino-acid sequence, 197 residues long: Nucleoid occlusion factor SlmA (197 aa).

One can recognise an HTH tetR-type domain in the interval 7–67; it reads ISRREHILQC…GLIEFIEDSL (61 aa). A DNA-binding region (H-T-H motif) is located at residues 30–49; the sequence is TTAKLAAEVGVSEAALYRHF.

It belongs to the nucleoid occlusion factor SlmA family. As to quaternary structure, homodimer. Interacts with FtsZ.

Its subcellular location is the cytoplasm. It is found in the nucleoid. Required for nucleoid occlusion (NO) phenomenon, which prevents Z-ring formation and cell division over the nucleoid. Acts as a DNA-associated cell division inhibitor that binds simultaneously chromosomal DNA and FtsZ, and disrupts the assembly of FtsZ polymers. SlmA-DNA-binding sequences (SBS) are dispersed on non-Ter regions of the chromosome, preventing FtsZ polymerization at these regions. The protein is Nucleoid occlusion factor SlmA of Shewanella amazonensis (strain ATCC BAA-1098 / SB2B).